Here is a 240-residue protein sequence, read N- to C-terminus: MRTLFIGDLHLSADRLDITQAFTRFLDTELDDADALYILGDLFEVWVGDDIALPFALELAEKLKQVSQKLPVYFIHGNRDFMLGKQFARAAGMQILPEVTCLNLYGIETVILHGDSLCTLDKAYQRFRKLRSLSLARWLYGCLSKKTRQGIADKIRSNSKSSNQQKSYTIMDVEPNAVDALFAKTHTKHMIHGHTHRPAIHQLANGCQRIVVGDWYEQGSVLSVSAEGINLQSLPFEHTT.

Mn(2+) is bound by residues D8, H10, D41, N78, and H113. 78–79 (NR) contributes to the substrate binding site. Residues D121, S159, N163, K166, and H194 each contribute to the substrate site. Residues H194 and H196 each coordinate Mn(2+).

It belongs to the LpxH family. The cofactor is Mn(2+).

Its subcellular location is the cell inner membrane. It catalyses the reaction UDP-2-N,3-O-bis[(3R)-3-hydroxytetradecanoyl]-alpha-D-glucosamine + H2O = 2-N,3-O-bis[(3R)-3-hydroxytetradecanoyl]-alpha-D-glucosaminyl 1-phosphate + UMP + 2 H(+). Its pathway is glycolipid biosynthesis; lipid IV(A) biosynthesis; lipid IV(A) from (3R)-3-hydroxytetradecanoyl-[acyl-carrier-protein] and UDP-N-acetyl-alpha-D-glucosamine: step 4/6. Functionally, hydrolyzes the pyrophosphate bond of UDP-2,3-diacylglucosamine to yield 2,3-diacylglucosamine 1-phosphate (lipid X) and UMP by catalyzing the attack of water at the alpha-P atom. Involved in the biosynthesis of lipid A, a phosphorylated glycolipid that anchors the lipopolysaccharide to the outer membrane of the cell. In Shewanella baltica (strain OS195), this protein is UDP-2,3-diacylglucosamine hydrolase.